The chain runs to 389 residues: Multidrug resistance protein 1 (389 aa).

A run of 11 helical transmembrane segments spans residues 6–26, 42–62, 71–91, 102–122, 134–154, 160–180, 202–222, 243–263, 286–306, 336–356, and 358–378; these read ITLT…GLVI, AVGY…PIAG, KIMI…FGIG, MLGG…IADI, YMSA…GFLA, LPFF…ILTL, IFAP…FGLA, IAIM…VLFD, VFLL…VTVF, SMFT…LFDI, and VNYP…LTIA.

Belongs to the major facilitator superfamily. TCR/Tet family.

Its subcellular location is the cell membrane. Functionally, energy-dependent efflux pump responsible for decreased drug accumulation in multi-drug-resistant cells. Probably uses a transmembrane proton gradient as the energy source. Causes the efflux of a variety of toxic substances, including such structurally diverse compounds as ethidium bromide, rhodamine and acridine dyes, tetraphenylphosphonium, puromycin, chloramphenicol, doxorubicin, and fluoroquinolone antibiotics. The sequence is that of Multidrug resistance protein 1 (bmr) from Bacillus subtilis (strain 168).